The primary structure comprises 282 residues: tRNA pseudouridine synthase A (282 aa).

Asp-61 serves as the catalytic Nucleophile. Substrate is bound at residue Tyr-119.

It belongs to the tRNA pseudouridine synthase TruA family. Homodimer.

The catalysed reaction is uridine(38/39/40) in tRNA = pseudouridine(38/39/40) in tRNA. In terms of biological role, formation of pseudouridine at positions 38, 39 and 40 in the anticodon stem and loop of transfer RNAs. The polypeptide is tRNA pseudouridine synthase A (Nostoc sp. (strain PCC 7120 / SAG 25.82 / UTEX 2576)).